Consider the following 429-residue polypeptide: 4-hydroxyphenylacetate degradation bifunctional isomerase/decarboxylase (429 aa).

Approximate repeat units follow at residues 1–215 (MKGT…RKSF) and 216–429 (PTLP…ETAK). The a divalent metal cation site is built by E276, E278, and D307.

Belongs to the FAH family. In terms of assembly, monomer. It depends on Mg(2+) as a cofactor.

It carries out the reaction (2E,4Z)-5-hydroxypenta-2,4-diene-1,2,5-tricarboxylate = (3E,5R)-5-carboxy-2-oxohept-3-enedioate. The catalysed reaction is (3E,5R)-5-carboxy-2-oxohept-3-enedioate + H(+) = (4Z)-2-oxohept-4-enedioate + CO2. It participates in aromatic compound metabolism; 4-hydroxyphenylacetate degradation; pyruvate and succinate semialdehyde from 4-hydroxyphenylacetate: step 4/7. It functions in the pathway aromatic compound metabolism; 4-hydroxyphenylacetate degradation; pyruvate and succinate semialdehyde from 4-hydroxyphenylacetate: step 5/7. In terms of biological role, decarboxylates OPET (5-oxo-pent-3-ene-1,2,5-tricarboxylic acid) into HHDD (2-hydroxy-hept-2,4-diene-1,7-dioate) and isomerizes it to OHED (2-oxo-hept-3-ene-1,7-dioate). This chain is 4-hydroxyphenylacetate degradation bifunctional isomerase/decarboxylase (hpaG), found in Escherichia coli.